The chain runs to 143 residues: Large ribosomal subunit protein uL13 (143 aa).

It belongs to the universal ribosomal protein uL13 family. In terms of assembly, part of the 50S ribosomal subunit.

This protein is one of the early assembly proteins of the 50S ribosomal subunit, although it is not seen to bind rRNA by itself. It is important during the early stages of 50S assembly. The polypeptide is Large ribosomal subunit protein uL13 (Albidiferax ferrireducens (strain ATCC BAA-621 / DSM 15236 / T118) (Rhodoferax ferrireducens)).